The following is a 152-amino-acid chain: ESAT-6 secretion machinery protein EssA (152 aa).

Topologically, residues 1-114 (MLMNSVIALT…PYIQNKQEKK (114 aa)) are cytoplasmic. A disordered region spans residues 62–83 (ERQQQIKNDMFQNQASHSTRLN). Polar residues predominate over residues 66-80 (QIKNDMFQNQASHST). The chain crosses the membrane as a helical span at residues 115–135 (IFPYILMSVGAFLTLGFVIFS). Residues 136-152 (IHKGRRTKNESARKSNI) are Extracellular-facing.

It belongs to the EssA family.

It is found in the cell membrane. Its function is as follows. Component of the ESAT-6 secretion system (Ess). Required for the secretion of EsxA and EsxB. This chain is ESAT-6 secretion machinery protein EssA, found in Staphylococcus aureus (strain COL).